Consider the following 570-residue polypeptide: Sulfite reductase [NADPH] hemoprotein beta-component (570 aa).

[4Fe-4S] cluster is bound by residues cysteine 434, cysteine 440, cysteine 479, and cysteine 483. Cysteine 483 is a binding site for siroheme.

Belongs to the nitrite and sulfite reductase 4Fe-4S domain family. Alpha(8)-beta(8). The alpha component is a flavoprotein, the beta component is a hemoprotein. Requires siroheme as cofactor. The cofactor is [4Fe-4S] cluster.

It catalyses the reaction hydrogen sulfide + 3 NADP(+) + 3 H2O = sulfite + 3 NADPH + 4 H(+). It functions in the pathway sulfur metabolism; hydrogen sulfide biosynthesis; hydrogen sulfide from sulfite (NADPH route): step 1/1. Its function is as follows. Component of the sulfite reductase complex that catalyzes the 6-electron reduction of sulfite to sulfide. This is one of several activities required for the biosynthesis of L-cysteine from sulfate. In Enterobacter sp. (strain 638), this protein is Sulfite reductase [NADPH] hemoprotein beta-component.